Here is a 167-residue protein sequence, read N- to C-terminus: Periplasmic nitrate reductase, electron transfer subunit (167 aa).

An N-terminal signal peptide occupies residues 1–34; it reads MRRAHRAGERVMMKRFGIALLAVAIAAGASSLTA. The disordered stretch occupies residues 40-65; sequence GLHGPAPLNDEGPAPPMLPNRNTSER. The heme c site is built by histidine 79, cysteine 93, cysteine 96, histidine 97, histidine 114, cysteine 133, cysteine 136, and histidine 137.

It belongs to the NapB family. In terms of assembly, component of the periplasmic nitrate reductase NapAB complex composed of NapA and NapB. Binds 2 heme C groups per subunit.

The protein resides in the periplasm. Electron transfer subunit of the periplasmic nitrate reductase complex NapAB. Receives electrons from the membrane-anchored tetraheme c-type NapC protein and transfers these to NapA subunit, thus allowing electron flow between membrane and periplasm. Essential for periplasmic nitrate reduction with nitrate as the terminal electron acceptor. The chain is Periplasmic nitrate reductase, electron transfer subunit from Bradyrhizobium japonicum.